Reading from the N-terminus, the 191-residue chain is Bcl-2-like protein 10 (191 aa).

The BH1 signature appears at 79 to 98; the sequence is LSKDQDFSWSQLVMLLAFAG. Lys112 is covalently cross-linked (Glycyl lysine isopeptide (Lys-Gly) (interchain with G-Cter in ubiquitin)). The BH2 motif lies at 144–155; that stretch reads RLEALGGWDGFC. The chain crosses the membrane as a helical span at residues 166–183; sequence FWRRLLIQAFLSGFFATA.

The protein belongs to the Bcl-2 family. Interacts with BAX. Interacts with BCL2 and BCL2L1/BCLX. Interacts with APAF1. Interacts with ITPR1, ITPR2 and ITPR3; the interaction with ITPR1 is increased in the presence of AHCLY1. Interacts with AHCYL1. Interacts with HIP1R (via ENTH and I/LWEQ domains). Interacts with CASP9. Interacts with BCL2L11/BIM. Interacts with BIK. Interacts with UBQLN4. Interacts with NME2/NM23-H2. Interacts with PMAIP1/NOXA. Interacts with TPX2. Interacts with UBQLN1; in the cytoplasm. Interacts (via BH1 domain) with BECN1. Ca(2+) serves as cofactor. Post-translationally, monoubiquitinated by UBQLN1; results in stabilization of BCL2L10 protein abundance and in relocalization from mitochondria to cytoplasm. In terms of tissue distribution, expressed in multiple embryonic tissues. Restricted to the ovary and testis in adult mice.

It is found in the mitochondrion. It localises to the nucleus membrane. Its subcellular location is the endoplasmic reticulum. The protein localises to the cytoplasm. The protein resides in the cytoskeleton. It is found in the spindle. In terms of biological role, promotes cell survival by suppressing apoptosis induced by BAX but not BAK. Increases binding of AHCYL1/IRBIT to ITPR1. Reduces ITPR1-mediated calcium release from the endoplasmic reticulum cooperatively with AHCYL1/IRBIT under normal cellular conditions. Under apoptotic stress conditions, dissociates from ITPR1 and is displaced from mitochondria-associated endoplasmic reticulum membranes, leading to increased Ca(2+) transfer to mitochondria which promotes apoptosis. Required for the correct formation of the microtubule organizing center during oocyte cell division, potentially via regulation of protein abundance and localization of other microtubule organizing center components such as AURKA and TPX2. The protein is Bcl-2-like protein 10 of Mus musculus (Mouse).